Consider the following 337-residue polypeptide: HTH-type transcriptional regulator DegA (337 aa).

Residues 1–57 (MKTTIYDVAKAAGVSITTVSRVINNTGRISDKTRQKVMNVMNEMAYTPNVHAAALTG) form the HTH lacI-type domain. Positions 5–24 (IYDVAKAAGVSITTVSRVIN) form a DNA-binding region, H-T-H motif. The tract at residues 300-319 (AERHRTAGRSNRGKRKAKQK) is disordered.

Its function is as follows. Involved in the control of degradation of B.subtilis amidophosphoribosyltransferase (purF). Probably activates the gene for a degradative protease. The sequence is that of HTH-type transcriptional regulator DegA (degA) from Bacillus subtilis (strain 168).